Here is a 175-residue protein sequence, read N- to C-terminus: Alkyl hydroperoxide reductase AhpD (175 aa).

The Proton donor role is filled by Cys131. Cys131 and Cys134 are disulfide-bonded. Cys134 acts as the Cysteine sulfenic acid (-SOH) intermediate in catalysis.

This sequence belongs to the AhpD family.

It catalyses the reaction N(6)-[(R)-dihydrolipoyl]-L-lysyl-[lipoyl-carrier protein] + a hydroperoxide = N(6)-[(R)-lipoyl]-L-lysyl-[lipoyl-carrier protein] + an alcohol + H2O. In terms of biological role, antioxidant protein with alkyl hydroperoxidase activity. Required for the reduction of the AhpC active site cysteine residues and for the regeneration of the AhpC enzyme activity. The protein is Alkyl hydroperoxide reductase AhpD of Brucella canis (strain ATCC 23365 / NCTC 10854 / RM-666).